We begin with the raw amino-acid sequence, 179 residues long: Repressor of phase 1 flagellin gene (179 aa).

Transcriptional repressor of the FliC phase-1 flagellin. In Salmonella abony, this protein is Repressor of phase 1 flagellin gene (fljA).